A 226-amino-acid chain; its full sequence is 2,3-bisphosphoglycerate-dependent phosphoglycerate mutase (226 aa).

Residues 8 to 15 (RHGQSVWN), 21 to 22 (TG), arginine 58, 109 to 112 (ERMY), lysine 120, 136 to 137 (RR), and 180 to 181 (GN) each bind substrate. The active-site Tele-phosphohistidine intermediate is the histidine 9. Glutamate 109 (proton donor/acceptor) is an active-site residue.

It belongs to the phosphoglycerate mutase family. BPG-dependent PGAM subfamily.

It carries out the reaction (2R)-2-phosphoglycerate = (2R)-3-phosphoglycerate. It functions in the pathway carbohydrate degradation; glycolysis; pyruvate from D-glyceraldehyde 3-phosphate: step 3/5. Functionally, catalyzes the interconversion of 2-phosphoglycerate and 3-phosphoglycerate. This chain is 2,3-bisphosphoglycerate-dependent phosphoglycerate mutase, found in Chlamydia muridarum (strain MoPn / Nigg).